The sequence spans 178 residues: ATP synthase subunit delta (178 aa).

This sequence belongs to the ATPase delta chain family. As to quaternary structure, F-type ATPases have 2 components, F(1) - the catalytic core - and F(0) - the membrane proton channel. F(1) has five subunits: alpha(3), beta(3), gamma(1), delta(1), epsilon(1). F(0) has three main subunits: a(1), b(2) and c(10-14). The alpha and beta chains form an alternating ring which encloses part of the gamma chain. F(1) is attached to F(0) by a central stalk formed by the gamma and epsilon chains, while a peripheral stalk is formed by the delta and b chains.

Its subcellular location is the cell membrane. Functionally, f(1)F(0) ATP synthase produces ATP from ADP in the presence of a proton or sodium gradient. F-type ATPases consist of two structural domains, F(1) containing the extramembraneous catalytic core and F(0) containing the membrane proton channel, linked together by a central stalk and a peripheral stalk. During catalysis, ATP synthesis in the catalytic domain of F(1) is coupled via a rotary mechanism of the central stalk subunits to proton translocation. In terms of biological role, this protein is part of the stalk that links CF(0) to CF(1). It either transmits conformational changes from CF(0) to CF(1) or is implicated in proton conduction. This is ATP synthase subunit delta from Streptococcus pyogenes serotype M6 (strain ATCC BAA-946 / MGAS10394).